Here is a 190-residue protein sequence, read N- to C-terminus: NADH-ubiquinone oxidoreductase 75 kDa subunit, mitochondrial (190 aa).

The protein belongs to the complex I 75 kDa subunit family. Core subunit of respiratory chain NADH dehydrogenase (Complex I) which is composed of 45 different subunits. This is the largest subunit of complex I and it is a component of the iron-sulfur (IP) fragment of the enzyme. Complex I associates with ubiquinol-cytochrome reductase complex (Complex III) to form supercomplexes. Interacts with MDM2 and AKAP1. The cofactor is [2Fe-2S] cluster. Requires [4Fe-4S] cluster as cofactor.

The protein localises to the mitochondrion inner membrane. The catalysed reaction is a ubiquinone + NADH + 5 H(+)(in) = a ubiquinol + NAD(+) + 4 H(+)(out). Core subunit of the mitochondrial membrane respiratory chain NADH dehydrogenase (Complex I) which catalyzes electron transfer from NADH through the respiratory chain, using ubiquinone as an electron acceptor. Essential for catalysing the entry and efficient transfer of electrons within complex I. Plays a key role in the assembly and stability of complex I and participates in the association of complex I with ubiquinol-cytochrome reductase complex (Complex III) to form supercomplexes. This chain is NADH-ubiquinone oxidoreductase 75 kDa subunit, mitochondrial, found in Mesocricetus auratus (Golden hamster).